Reading from the N-terminus, the 477-residue chain is Bifunctional protein HldE (477 aa).

The segment at 1–318 (MQIQLPMFQN…RRAVQQEQGA (318 aa)) is ribokinase. 195–198 (NLSE) is an ATP binding site. Residue D264 is part of the active site. The cytidylyltransferase stretch occupies residues 344 to 477 (FTNGCFDIIH…VEKIRKDQVK (134 aa)).

It in the N-terminal section; belongs to the carbohydrate kinase PfkB family. In the C-terminal section; belongs to the cytidylyltransferase family. In terms of assembly, homodimer.

It catalyses the reaction D-glycero-beta-D-manno-heptose 7-phosphate + ATP = D-glycero-beta-D-manno-heptose 1,7-bisphosphate + ADP + H(+). It carries out the reaction D-glycero-beta-D-manno-heptose 1-phosphate + ATP + H(+) = ADP-D-glycero-beta-D-manno-heptose + diphosphate. It functions in the pathway nucleotide-sugar biosynthesis; ADP-L-glycero-beta-D-manno-heptose biosynthesis; ADP-L-glycero-beta-D-manno-heptose from D-glycero-beta-D-manno-heptose 7-phosphate: step 1/4. Its pathway is nucleotide-sugar biosynthesis; ADP-L-glycero-beta-D-manno-heptose biosynthesis; ADP-L-glycero-beta-D-manno-heptose from D-glycero-beta-D-manno-heptose 7-phosphate: step 3/4. Catalyzes the phosphorylation of D-glycero-D-manno-heptose 7-phosphate at the C-1 position to selectively form D-glycero-beta-D-manno-heptose-1,7-bisphosphate. In terms of biological role, catalyzes the ADP transfer from ATP to D-glycero-beta-D-manno-heptose 1-phosphate, yielding ADP-D-glycero-beta-D-manno-heptose. The sequence is that of Bifunctional protein HldE from Hahella chejuensis (strain KCTC 2396).